A 433-amino-acid polypeptide reads, in one-letter code: Pyrimidine-nucleoside phosphorylase (433 aa).

Residue 81–83 (KHS) coordinates phosphate. Positions 88 and 90 each coordinate K(+). Residues T92, 108 to 110 (KMS), and T120 each bind phosphate. Substrate-binding residues include R168 and K187. Residues L243, A246, and E255 each contribute to the K(+) site.

It belongs to the thymidine/pyrimidine-nucleoside phosphorylase family. As to quaternary structure, homodimer. The cofactor is K(+).

It carries out the reaction uridine + phosphate = alpha-D-ribose 1-phosphate + uracil. The enzyme catalyses thymidine + phosphate = 2-deoxy-alpha-D-ribose 1-phosphate + thymine. It catalyses the reaction 2'-deoxyuridine + phosphate = 2-deoxy-alpha-D-ribose 1-phosphate + uracil. Its function is as follows. Catalyzes phosphorolysis of the pyrimidine nucleosides uridine, thymidine and 2'-deoxyuridine with the formation of the corresponding pyrimidine base and ribose-1-phosphate. The protein is Pyrimidine-nucleoside phosphorylase (pdp) of Staphylococcus aureus (strain bovine RF122 / ET3-1).